A 298-amino-acid polypeptide reads, in one-letter code: MKLRFQRVALVGKYQAPTSAGMSDSSRDALDGIARFLANEGCEVALEADTAANTGFTDYPALSVERIGLDCDLCLVVGGDGTMLGVGRQLAQYRTPLIGINQGRLGFITDIPLGEYPTVLKPMLRGEYEEDLRPLMRARVMRQGQCVFEALAMNDVVVNRGSTSGMVELRVEVGGHFVSNQRADGLIIASPTGSTAYALSAGGPMLHPTIPGWVLAPIAPHTLSNRPIVLSDSMEVAVEVVSGRDVSANFDMQSLASLQHGDRILVQRSDYRARFLHPRGWNYFATLRKKLRWNEGGY.

Residue aspartate 80 is the Proton acceptor of the active site. NAD(+) contacts are provided by residues aspartate 80 to glycine 81, asparagine 154 to aspartate 155, arginine 182, aspartate 184, threonine 195 to serine 200, alanine 219, and glutamine 253.

This sequence belongs to the NAD kinase family. A divalent metal cation is required as a cofactor.

The protein localises to the cytoplasm. The enzyme catalyses NAD(+) + ATP = ADP + NADP(+) + H(+). In terms of biological role, involved in the regulation of the intracellular balance of NAD and NADP, and is a key enzyme in the biosynthesis of NADP. Catalyzes specifically the phosphorylation on 2'-hydroxyl of the adenosine moiety of NAD to yield NADP. In Paracidovorax citrulli (strain AAC00-1) (Acidovorax citrulli), this protein is NAD kinase.